A 324-amino-acid chain; its full sequence is MEQTQKLKLNLQHFASNNVKPQVFNPDNVMMHEKKDGTLMNEFTTPILQEVMENSKIMQLGKYEPMEGTEKKFTFWADKPGAYWVGEGQKIETSKATWVNATMRAFKLGVILPVTKEFLNYTYSQFFEEMKPMIAEAFYKKFDEAGILNQGNNPFGKSIAQSIEKTNKVIKGDFTQDNIIDLEALLEDDELEANAFISKTQNRSLLRKIVDPETKERIYDRNSDSLDGLPVVNLKSSNLKRGELITGDFDKLIYGIPQLIEYKIDETAQLSTVKNEDGTPVNLFEQDMVALRATMHVALHIADDKAFAKLVPADKRTDSVPGEV.

The propeptide occupies methionine 1–phenylalanine 14.

It belongs to the HK97 phage major capsid protein family. As to quaternary structure, forms homopentamers and homohexamers in the mature capsid forming a 63 nm icosahedral head with T=7 architecture. The procapsid is made up of hexamers and pentamers of this subunit. There are seven subunits in the asymmetric unit in the T=7 procapsid. Found in the procapsid with the scaffold protein in a 2:1 capsid protein:scaffold protein molecular ratio. In terms of processing, the N-terminus is cleaved by ribosomal processing protease Prp.

The protein resides in the virion. Its function is as follows. Assembles to form an icosahedral capsid, as well as procapsid, with T=7 icosahedral symmetry. This Staphylococcus aureus protein is Major capsid protein.